A 551-amino-acid chain; its full sequence is Xylulose kinase (551 aa).

The substrate site is built by His-114, Arg-185, Asp-295, and Asn-296. Residues Trp-370, 456-457 (GA), and Asn-460 each bind ATP.

Belongs to the FGGY kinase family. In terms of assembly, monomer.

It catalyses the reaction D-xylulose + ATP = D-xylulose 5-phosphate + ADP + H(+). Functionally, phosphorylates D-xylulose to produce D-xylulose 5-phosphate, a molecule that may play an important role in the regulation of glucose metabolism and lipogenesis. This is Xylulose kinase (Xylb) from Mus musculus (Mouse).